The primary structure comprises 347 residues: Selenide, water dikinase (347 aa).

The active site involves Cys-16. ATP contacts are provided by residues Lys-19 and 47–49; that span reads TRD. Asp-50 lines the Mg(2+) pocket. ATP-binding positions include Asp-67, Asp-90, and 138–140; that span reads GHS. Asp-90 is a binding site for Mg(2+). Asp-226 is a Mg(2+) binding site.

The protein belongs to the selenophosphate synthase 1 family. Class I subfamily. As to quaternary structure, homodimer. Mg(2+) serves as cofactor.

The enzyme catalyses hydrogenselenide + ATP + H2O = selenophosphate + AMP + phosphate + 2 H(+). In terms of biological role, synthesizes selenophosphate from selenide and ATP. This chain is Selenide, water dikinase, found in Photorhabdus laumondii subsp. laumondii (strain DSM 15139 / CIP 105565 / TT01) (Photorhabdus luminescens subsp. laumondii).